A 266-amino-acid polypeptide reads, in one-letter code: Small ribosomal subunit protein eS1 (266 aa).

The tract at residues 233 to 266 (GEGGGSSAAKPSGDDTGAKVDRADGYEPPIQETV) is disordered. The segment covering 244-257 (SGDDTGAKVDRADG) has biased composition (basic and acidic residues).

It belongs to the eukaryotic ribosomal protein eS1 family. In terms of assembly, component of the small ribosomal subunit. Mature ribosomes consist of a small (40S) and a large (60S) subunit. The 40S subunit contains about 33 different proteins and 1 molecule of RNA (18S). The 60S subunit contains about 49 different proteins and 3 molecules of RNA (28S, 5.8S and 5S). Part of the small subunit (SSU) processome, composed of more than 70 proteins and the RNA chaperone small nucleolar RNA (snoRNA) U3.

It is found in the cytoplasm. The protein localises to the nucleus. It localises to the nucleolus. In terms of biological role, component of the small ribosomal subunit. The ribosome is a large ribonucleoprotein complex responsible for the synthesis of proteins in the cell. Part of the small subunit (SSU) processome, first precursor of the small eukaryotic ribosomal subunit. During the assembly of the SSU processome in the nucleolus, many ribosome biogenesis factors, an RNA chaperone and ribosomal proteins associate with the nascent pre-rRNA and work in concert to generate RNA folding, modifications, rearrangements and cleavage as well as targeted degradation of pre-ribosomal RNA by the RNA exosome. May play a role during erythropoiesis. The sequence is that of Small ribosomal subunit protein eS1 (rps3a) from Salmo salar (Atlantic salmon).